The following is a 985-amino-acid chain: MPESLIAGIPVHFPFEPYPVQRAYMEKVIQCLRDGTNGVLESPTGTGKTLSLLCSSLAWIRTRQSEHQQQMVKMEKADFTGLGGGAAGGDLSELAKTMGRANNWGVPKVIYASRTHSQLTQAMRELKRTAYANMRSVVLGSRDQLCIHPEVMREQGNSNKTNMCKLRVHSKTCSFQMRVESRKDHPDLRGPSIMDIEDLVKVGQRLKICPYFASRELVPQADITFMPYNYLLDPKARKANKIELGNTIVILDEAHNIEKICEESASVQIKSSDVAMAIEDVTHIMQVFASGESQDMGGDEPKDFTLDDLTLLKEMLLEFEKAIDAVVVENAVEGTTFPASMMYELLGKANFTYGNVATIVSLLDKLVQYLLVASQQMTIRKGGTFTMLSDLLTIVFANKEDVMSKVYASFKVHVQLEEVKQGHGKQQGGKQHGGWLGKGTIAAATGSIKVAKIINFWCFNPGFGMEQLLNTQVRSVILTSGTLAPLKPLIAELAIPVAQHLENPHIVDQSQVYVKIIGTGPDRQQLISNYANRDNPKYISSLGQTILNVSRIVPDGLLVFFPSYPMLNKCVDAWQASGLWADISVKKPIFLEPRSKDQFTSTMEEFYQAIRDSKGAVFMAVCRGKVSEGLDFADRNGRAVIITGLPFPPLKDPKVILKRRYLEANRTRENQLLSGQEWYNLDATRAVNQAIGRVIRHRNDYGAILLCDSRFKDASQVQQLSKWIRGHLGDRPQCSPFGPIVRELRQFFKNAEANMKLPDERETDSPLETVCKTENEPIAAIPKVKREPGSNATFKSANESAIKVEMANSIKTWTPADYASAAGRKLGGAAPNAMDFMSRLDSNVSSIDFNCCMDSKSGSSGMVKIHKRERSSPTQPESSSQVSKKRYKLVENIKVEPSSSQVKEAPAERADFLRELRSLVTQDQFRRFGKALLEYKDGTYESFQALMVILLDVLSAPKVRYMLVGMRKYLKNEHKDEFDQKVGKL.

The region spanning 7–303 is the Helicase ATP-binding domain; the sequence is AGIPVHFPFE…QDMGGDEPKD (297 aa). 42–49 contributes to the ATP binding site; sequence SPTGTGKT. Residues Cys146, Cys164, Cys173, and Cys209 each coordinate [4Fe-4S] cluster. The DEAH box signature appears at 252–255; sequence DEAH. The segment at 858–884 is disordered; it reads GSSGMVKIHKRERSSPTQPESSSQVSK. The segment covering 872-882 has biased composition (polar residues); it reads SPTQPESSSQV. Thr874 carries the post-translational modification Phosphothreonine.

It belongs to the helicase family. RAD3/XPD subfamily.

The protein localises to the nucleus. The enzyme catalyses ATP + H2O = ADP + phosphate + H(+). Functionally, a probable ATP-dependent DNA helicase implicated in DNA repair and the maintenance of genomic stability. Acts as an anti-recombinase to counteract toxic recombination and limit crossover during meiosis. Regulates meiotic recombination and crossover homeostasis by physically dissociating strand invasion events and thereby promotes noncrossover repair by meiotic synthesis dependent strand annealing (SDSA) as well as disassembly of D loop recombination intermediates. This chain is Regulator of telomere elongation helicase 1 homolog, found in Drosophila yakuba (Fruit fly).